A 725-amino-acid polypeptide reads, in one-letter code: Phosphoribosylformylglycinamidine synthase subunit PurL (725 aa).

The active site involves histidine 41. Tyrosine 44 and lysine 83 together coordinate ATP. Mg(2+) is bound at residue glutamate 85. Substrate contacts are provided by residues 86–89 (SHNH) and arginine 108. The active-site Proton acceptor is histidine 87. Mg(2+) is bound at residue aspartate 109. Glutamine 231 contacts substrate. Aspartate 259 is a Mg(2+) binding site. Residue 303-305 (ESQ) participates in substrate binding. ATP-binding residues include aspartate 485 and glycine 522. Asparagine 523 lines the Mg(2+) pocket. Position 525 (serine 525) interacts with substrate.

Belongs to the FGAMS family. In terms of assembly, monomer. Part of the FGAM synthase complex composed of 1 PurL, 1 PurQ and 2 PurS subunits.

Its subcellular location is the cytoplasm. It catalyses the reaction N(2)-formyl-N(1)-(5-phospho-beta-D-ribosyl)glycinamide + L-glutamine + ATP + H2O = 2-formamido-N(1)-(5-O-phospho-beta-D-ribosyl)acetamidine + L-glutamate + ADP + phosphate + H(+). It functions in the pathway purine metabolism; IMP biosynthesis via de novo pathway; 5-amino-1-(5-phospho-D-ribosyl)imidazole from N(2)-formyl-N(1)-(5-phospho-D-ribosyl)glycinamide: step 1/2. Functionally, part of the phosphoribosylformylglycinamidine synthase complex involved in the purines biosynthetic pathway. Catalyzes the ATP-dependent conversion of formylglycinamide ribonucleotide (FGAR) and glutamine to yield formylglycinamidine ribonucleotide (FGAM) and glutamate. The FGAM synthase complex is composed of three subunits. PurQ produces an ammonia molecule by converting glutamine to glutamate. PurL transfers the ammonia molecule to FGAR to form FGAM in an ATP-dependent manner. PurS interacts with PurQ and PurL and is thought to assist in the transfer of the ammonia molecule from PurQ to PurL. In Thermus thermophilus (strain ATCC BAA-163 / DSM 7039 / HB27), this protein is Phosphoribosylformylglycinamidine synthase subunit PurL.